The primary structure comprises 226 residues: Ribonuclease 3 (226 aa).

In terms of domain architecture, RNase III spans 7–129 (LARLSRTLGY…IIGAVYLDAN (123 aa)). Glu-42 contacts Mg(2+). Asp-46 is a catalytic residue. 2 residues coordinate Mg(2+): Asp-115 and Glu-118. The active site involves Glu-118. Positions 156-226 (DPKTILQEYL…AAQILELINK (71 aa)) constitute a DRBM domain.

It belongs to the ribonuclease III family. Homodimer. Mg(2+) serves as cofactor.

The protein resides in the cytoplasm. It carries out the reaction Endonucleolytic cleavage to 5'-phosphomonoester.. Digests double-stranded RNA. Involved in the processing of primary rRNA transcript to yield the immediate precursors to the large and small rRNAs (23S and 16S). Processes some mRNAs, and tRNAs when they are encoded in the rRNA operon. Processes pre-crRNA and tracrRNA of type II CRISPR loci if present in the organism. In Shewanella denitrificans (strain OS217 / ATCC BAA-1090 / DSM 15013), this protein is Ribonuclease 3.